Reading from the N-terminus, the 178-residue chain is MSRIGNKAITIPTGVEIKQEGDQVTVKGPKGEITRSIASVISMNIEGSEAKFSRPDDSNRNKALHGTTRANVANMIEGVSKGFKKNLELVGVGYRASMQGDKLVLTVGFSHPVEFEAREGLKVAVPDATHISIEGISKQRVGDFAAEIRGVRPPEPYKGKGIRYQGEIVRRKEGKTGK.

It belongs to the universal ribosomal protein uL6 family. Part of the 50S ribosomal subunit.

This protein binds to the 23S rRNA, and is important in its secondary structure. It is located near the subunit interface in the base of the L7/L12 stalk, and near the tRNA binding site of the peptidyltransferase center. This is Large ribosomal subunit protein uL6 from Oenococcus oeni (strain ATCC BAA-331 / PSU-1).